Here is a 652-residue protein sequence, read N- to C-terminus: WD repeat-containing protein 70 (652 aa).

Disordered stretches follow at residues 1 to 22 (MERP…LAVT) and 45 to 171 (RRTA…IPDS). Positions 45 to 76 (RRTAVERSRKTLEAREREEEMNREKELRRQNE) are enriched in basic and acidic residues. Low complexity predominate over residues 92 to 102 (SKSSSRDTSSS). Composition is skewed to acidic residues over residues 103 to 115 (ESDE…DDEL) and 146 to 162 (EDVE…EEEE). WD repeat units lie at residues 178–217 (HGTK…ASFK), 225–266 (CECH…ECIK), 279–319 (GHTA…KQKS), 328–367 (GKKV…HPKF), 374–413 (DPGT…KPLF), 419–464 (PTMF…RVYE), and 467–506 (ITDA…QRGA). Residue lysine 294 forms a Glycyl lysine isopeptide (Lys-Gly) (interchain with G-Cter in SUMO2) linkage. An N6-acetyllysine modification is found at lysine 450. Residues 538–563 (REPRQRSTRKQLEKDRLDPLKSHKPE) show a composition bias toward basic and acidic residues. Residues 538–577 (REPRQRSTRKQLEKDRLDPLKSHKPEPPVAGPGRGGRVGT) form a disordered region. At threonine 577 the chain carries Phosphothreonine. Glycyl lysine isopeptide (Lys-Gly) (interchain with G-Cter in SUMO2) cross-links involve residues lysine 588 and lysine 594. Residues serine 619 and serine 636 each carry the phosphoserine modification. The disordered stretch occupies residues 629 to 652 (TMFAQVESDDEETKNEPEWKKRKI). The span at 642–652 (KNEPEWKKRKI) shows a compositional bias: basic and acidic residues.

The protein belongs to the WD repeat GAD-1 family.

This chain is WD repeat-containing protein 70 (WDR70), found in Bos taurus (Bovine).